Here is a 177-residue protein sequence, read N- to C-terminus: Retrograde regulation protein 1 (177 aa).

The disordered stretch occupies residues 1–24 (MSSIPAGTDPGSCGANFKNDRKRR). One can recognise a bHLH domain in the interval 11-96 (GSCGANFKND…TQAVEYISHL (86 aa)). 2 positions are modified to phosphoserine: Ser50 and Ser52. 2 disordered regions span residues 52–82 (SNDTLSESTPGALGLSSKAKGTGTKDGKPNK) and 147–177 (LAATNDDSVRPPAKRLSSFEYGGYGEYGNGS). Thr60 is modified (phosphothreonine). The segment covering 168–177 (GGYGEYGNGS) has biased composition (gly residues).

In terms of assembly, binds DNA as a heterodimer with RTG3.

It is found in the nucleus. Functionally, required for a novel path of interorganelle communication between mitochondria, peroxisomes and the nucleus, thereby maintaining a functional metabolic interaction between the tricarboxylic acid and glyoxylate cycles. Transcription factor that regulates CIT2 gene expression. Binds to two identical sites oriented as inverted repeats 28 bp apart in a regulatory upstream activation sequence element (UASR) in the CIT2 promoter. The core binding site is 5'-GGTCAC-3'. The polypeptide is Retrograde regulation protein 1 (RTG1) (Saccharomyces cerevisiae (strain ATCC 204508 / S288c) (Baker's yeast)).